The sequence spans 33 residues: U1-pseudomyrmecitoxin-Pt1 subunit LS2 (33 aa).

The protein belongs to the myrmexin family. In terms of assembly, heterodimer composed of subunit LS2 and subunit SS1, heterodimer composed of subunit LS2 and SS2, and heterodimer composed of subunit LS2 and SS3; disulfide-linked. As to expression, expressed by the venom gland.

Its subcellular location is the secreted. This heterodimer may have anti-inflammatory properties, since the myrmexin complex (composed of 6 SS-LS heterodimers) inhibits carrageenin-induced edema in a dose-dependent manner (after subcutaneous injection into rats). The polypeptide is U1-pseudomyrmecitoxin-Pt1 subunit LS2 (Pseudomyrmex triplarinus (Ant)).